A 393-amino-acid polypeptide reads, in one-letter code: SH3 domain-binding protein 5-like (393 aa).

2 disordered regions span residues 1–59 (MAEL…LDPR) and 272–332 (HARR…DTDT). Thr13 is subject to Phosphothreonine. Over residues 18–28 (LRPEVVEDEVP) the composition is skewed to basic and acidic residues. Phosphoserine occurs at positions 30 and 49. Coiled-coil stretches lie at residues 59 to 140 (RIQE…YERA) and 169 to 272 (WQEM…EQIH). Positions 304–313 (GDSGIEGAEG) are enriched in gly residues. A compositionally biased stretch (low complexity) spans 317 to 332 (EEGSSLGPGPAPDTDT). 5 positions are modified to phosphoserine: Ser343, Ser350, Ser358, Ser362, and Ser378. The tract at residues 364–393 (DGQELGTRSGGRRGSDGGVRGGRHQRSVSL) is disordered. A compositionally biased stretch (basic residues) spans 384 to 393 (GGRHQRSVSL).

Belongs to the SH3BP5 family.

Its function is as follows. Functions as a guanine nucleotide exchange factor (GEF) for RAB11A. This chain is SH3 domain-binding protein 5-like (SH3BP5L), found in Pongo abelii (Sumatran orangutan).